A 200-amino-acid polypeptide reads, in one-letter code: Superoxide dismutase [Mn] 1 (200 aa).

Mn(2+) is bound by residues His29, His76, Asp158, and His162.

The protein belongs to the iron/manganese superoxide dismutase family. As to quaternary structure, homodimer or homotetramer. The cofactor is Mn(2+).

The enzyme catalyses 2 superoxide + 2 H(+) = H2O2 + O2. With respect to regulation, inhibited by hydrogen peroxide. Is resistant to cyanide and azide inhibition. Functionally, destroys superoxide anion radicals which are normally produced within the cells and which are toxic to biological systems. This Halobacterium salinarum (strain ATCC 700922 / JCM 11081 / NRC-1) (Halobacterium halobium) protein is Superoxide dismutase [Mn] 1 (sod1).